A 157-amino-acid polypeptide reads, in one-letter code: Ribonuclease H (157 aa).

Residues 4–146 (KRTEITIYTD…CDKLAVKASQ (143 aa)) form the RNase H type-1 domain. Residues aspartate 13, glutamate 51, aspartate 73, and aspartate 138 each contribute to the Mg(2+) site.

It belongs to the RNase H family. In terms of assembly, monomer. Mg(2+) is required as a cofactor.

It localises to the cytoplasm. It catalyses the reaction Endonucleolytic cleavage to 5'-phosphomonoester.. Functionally, endonuclease that specifically degrades the RNA of RNA-DNA hybrids. In Trichodesmium erythraeum (strain IMS101), this protein is Ribonuclease H.